The chain runs to 1712 residues: Latent-transforming growth factor beta-binding protein 1 (1712 aa).

The first 20 residues, 1–20, serve as a signal peptide directing secretion; that stretch reads MAGAWLRWGLLLWAGLLAWS. The interval 63-148 is disordered; the sequence is SSTATSSRSL…QDTQSSGGSR (86 aa). Residues 136–147 show a composition bias toward polar residues; that stretch reads KVQQDTQSSGGS. In terms of domain architecture, EGF-like 1 spans 181-213; the sequence is TKPSCVPPCQNGGMCLRPQFCVCKPGTKGKACE. Intrachain disulfides connect C185–C195, C189–C201, and C203–C212. Residues N339 and N370 are each glycosylated (N-linked (GlcNAc...) asparagine). The EGF-like 2 domain maps to 391–423; that stretch reads RVVICHLPCMNGGQCSSRDKCQCPPNFTGKLCQ. Disulfide bonds link C395-C405, C399-C411, C413-C422, C551-C573, C560-C586, and C574-C589. N-linked (GlcNAc...) asparagine glycosylation is present at N416. The 53-residue stretch at 549 to 601 folds into the TB 1 domain; sequence GRCFQETIGSQCGKALPGLSKQEDCCGTVGTSWGFNKCQKCPKKQSYHGYTQM. Residue N612 is glycosylated (N-linked (GlcNAc...) asparagine). The EGF-like 3; calcium-binding domain occupies 618-658; sequence DINECQLQGVCPNGECLNTMGSYRCSCKMGFGPDPTFSSCV. Intrachain disulfides connect C622–C633, C628–C642, C644–C657, C671–C694, C681–C706, C695–C709, and C696–C721. O-linked (Glc) serine glycosylation occurs at S639. Positions 669 to 721 constitute a TB 2 domain; sequence GPCYRLVSPGRQCMHPLSVHLTKQICCCSVGKAWGPQCEKCPLPGTAAFKEIC. The tract at residues 752 to 803 is disordered; the sequence is KNTQPVAKSTHPPPLPAKEEPVEALTSSREHGPGVAEPEVVTAPPEKEIPSL. O-linked (GalNAc...) threonine glycosylation is found at T761 and T793. An EGF-like 4; calcium-binding domain is found at 865–906; that stretch reads EINECTVNPDICGAGHCINLPVRYTCICYEGYKFSEQQRKCI. Disulfide bonds link C869/C881, C876/C890, C892/C905, C911/C923, C918/C932, C934/C947, C953/C964, C959/C973, C976/C988, C994/C1005, C1000/C1014, C1017/C1028, C1034/C1045, C1040/C1054, C1056/C1069, C1075/C1086, C1081/C1095, C1097/C1110, C1116/C1127, C1122/C1136, C1138/C1151, C1157/C1169, C1164/C1178, C1180/C1192, C1198/C1210, C1204/C1219, C1221/C1234, C1240/C1252, C1246/C1261, C1263/C1276, C1282/C1294, C1289/C1303, C1305/C1319, C1340/C1363, C1350/C1375, C1364/C1380, and C1365/C1392. The EGF-like 5; calcium-binding domain occupies 907 to 948; the sequence is DIDECAQAQHLCSQGRCENTEGSFLCICPAGFIASEEGSNCI. An O-linked (Glc) serine glycan is attached at S929. One can recognise an EGF-like 6; calcium-binding domain in the interval 949–989; sequence DVDECLRPDVCRDGRCINTAGAFRCEYCDSGYRMSRRGHCE. Position 966 is a (3R)-3-hydroxyasparagine (N966). The EGF-like 7; calcium-binding domain occupies 990 to 1029; it reads DIDECLTPSTCPEEQCVNSPGSYQCVPCTEGFRGWNGQCL. O-linked (Glc) serine glycosylation occurs at S1011. The region spanning 1030-1070 is the EGF-like 8; calcium-binding domain; sequence DVDECLQPKVCTNGSCTNLEGSYMCSCHKGYSPTPDHRHCQ. N1042 is a glycosylation site (N-linked (GlcNAc...) asparagine). A glycan (O-linked (Glc) serine) is linked at S1051. An EGF-like 9; calcium-binding domain is found at 1071 to 1111; that stretch reads DIDECQQGNLCMNGQCKNTDGSFRCTCGQGYQLSAAKDQCE. One can recognise an EGF-like 10; calcium-binding domain in the interval 1112 to 1152; the sequence is DIDECEHRHLCSHGQCRNTEGSFQCLCNQGYRASVLGDHCE. N1129 bears the (3R)-3-hydroxyasparagine mark. An O-linked (Glc) serine glycan is attached at S1133. In terms of domain architecture, EGF-like 11; calcium-binding spans 1153–1193; sequence DINECLEDSSVCQGGDCINTAGSYDCTCPDGLQLNDNKGCQ. Residues 1194 to 1235 enclose the EGF-like 12; calcium-binding domain; the sequence is DINECAQPGLCAPHGECLNTQGSFHCVCEQGFSISADGRTCE. O-linked (Glc) serine glycosylation is present at S1216. Residues 1236–1277 form the EGF-like 13; calcium-binding domain; the sequence is DIDECVNNTVCDSHGFCDNTAGSFRCLCYQGFQAPQDGQGCV. N-linked (GlcNAc...) asparagine glycosylation is present at N1242. The EGF-like 14; calcium-binding domain occupies 1278-1320; that stretch reads DVNECELLSGVCGEAFCENVEGSFLCVCADENQEYSPMTGQCR. The tract at residues 1335–1402 is 8-Cys3 region; that stretch reads EEKKECYYNL…PRGKGFVPAG (68 aa). The TB 3 domain occupies 1338 to 1392; that stretch reads KECYYNLNDASLCDNVLAPNVTKQECCCTSGAGWGDNCEIFPCPVQGTAEFSEMC. N-linked (GlcNAc...) asparagine glycosylation is present at N1357. At S1405 the chain carries Phosphoserine. One can recognise an EGF-like 15; calcium-binding domain in the interval 1415–1457; sequence DADECLLFGEEICKNGYCLNTQPGYECYCKEGTYYDPVKLQCF. 10 disulfides stabilise this stretch: C1419-C1432, C1427-C1441, C1443-C1456, C1462-C1473, C1468-C1482, C1484-C1497, C1517-C1541, C1527-C1553, C1542-C1556, and C1543-C1568. An EGF-like 16; calcium-binding domain is found at 1458–1498; it reads DMDECQDPNSCIDGQCVNTEGSYNCFCTHPMVLDASEKRCV. S1479 is a glycosylation site (O-linked (Glc) serine). Positions 1498–1712 are C-terminal domain; that stretch reads VQPTESNEQI…LNLDKDSDLE (215 aa). The region spanning 1515 to 1568 is the TB 4 domain; the sequence is DLCWEHLSEEYVCSRPLVGKQTTYTECCCLYGEAWGMQCALCPMKDSDDYAQLC. Residues S1588 and S1607 each carry the phosphoserine modification. Residues 1612–1652 enclose the EGF-like 17 domain; that stretch reads QAEECGILNGCENGRCVRVQEGYTCDCFDGYHLDMAKMTCV. Intrachain disulfides connect C1616/C1627, C1622/C1636, C1638/C1651, C1657/C1672, C1667/C1681, and C1683/C1696. In terms of domain architecture, EGF-like 18; calcium-binding spans 1653-1697; sequence DVNECSELNNRMSLCKNAKCINTEGSYKCVCLPGYVPSDKPNYCT. The O-linked (Glc) serine glycan is linked to S1678.

This sequence belongs to the LTBP family. As to quaternary structure, interacts with TGFB1; associates via disulfide bonds with the Latency-associated peptide chain (LAP) regulatory chain of TGFB1, leading to regulate activation of TGF-beta-1. LTBP1 does not bind directly to TGF-beta-1, the active chain of TGFB1. Interacts (via C-terminal domain) with FBN1 (via N-terminal domain). Interacts with FBN2. Interacts with ADAMTSL2. Interacts with EFEMP2. Post-translationally, contains hydroxylated asparagine residues. In terms of processing, two intrachain disulfide bonds from the TB3 domain are rearranged upon TGFB1 binding, and form interchain bonds with TGFB1 propeptide, anchoring it to the extracellular matrix. O-glycosylated on serine residues by POGLUT2 and POGLUT3.

It is found in the secreted. The protein localises to the extracellular space. The protein resides in the extracellular matrix. In terms of biological role, key regulator of transforming growth factor beta (TGFB1, TGFB2 and TGFB3) that controls TGF-beta activation by maintaining it in a latent state during storage in extracellular space. Associates specifically via disulfide bonds with the Latency-associated peptide (LAP), which is the regulatory chain of TGF-beta, and regulates integrin-dependent activation of TGF-beta. Outcompeted by LRRC32/GARP for binding to LAP regulatory chain of TGF-beta. This is Latent-transforming growth factor beta-binding protein 1 (Ltbp1) from Rattus norvegicus (Rat).